The chain runs to 167 residues: MTKEEKAIIIQEVAQKIAGAATFYITDGSGMTVDQVNKFRKLCFSKGVEYKVVKNSLIKKALQQLNIDHTALNGAALKGASGLMFSDTANVPAKLLKQFHKGGVAKPEFKGASVFADFYVGKDKLDALASIKSKEELIGDIIALLQAPAQRVIGGLTNESRVFAEQA.

This sequence belongs to the universal ribosomal protein uL10 family. As to quaternary structure, part of the ribosomal stalk of the 50S ribosomal subunit. The N-terminus interacts with L11 and the large rRNA to form the base of the stalk. The C-terminus forms an elongated spine to which L12 dimers bind in a sequential fashion forming a multimeric L10(L12)X complex.

Forms part of the ribosomal stalk, playing a central role in the interaction of the ribosome with GTP-bound translation factors. The protein is Large ribosomal subunit protein uL10 of Cytophaga hutchinsonii (strain ATCC 33406 / DSM 1761 / CIP 103989 / NBRC 15051 / NCIMB 9469 / D465).